A 302-amino-acid chain; its full sequence is tRNA-cytidine(32) 2-sulfurtransferase (302 aa).

The PP-loop motif motif lies at 43–48; that stretch reads SGGKDS. 3 residues coordinate [4Fe-4S] cluster: C118, C121, and C209.

This sequence belongs to the TtcA family. In terms of assembly, homodimer. Mg(2+) serves as cofactor. Requires [4Fe-4S] cluster as cofactor.

It is found in the cytoplasm. It carries out the reaction cytidine(32) in tRNA + S-sulfanyl-L-cysteinyl-[cysteine desulfurase] + AH2 + ATP = 2-thiocytidine(32) in tRNA + L-cysteinyl-[cysteine desulfurase] + A + AMP + diphosphate + H(+). The protein operates within tRNA modification. Catalyzes the ATP-dependent 2-thiolation of cytidine in position 32 of tRNA, to form 2-thiocytidine (s(2)C32). The sulfur atoms are provided by the cysteine/cysteine desulfurase (IscS) system. The sequence is that of tRNA-cytidine(32) 2-sulfurtransferase from Polynucleobacter asymbioticus (strain DSM 18221 / CIP 109841 / QLW-P1DMWA-1) (Polynucleobacter necessarius subsp. asymbioticus).